We begin with the raw amino-acid sequence, 568 residues long: Probable pectinesterase/pectinesterase inhibitor 23 (568 aa).

The signal sequence occupies residues M1 to S33. The pectinesterase inhibitor 23 stretch occupies residues R45 to M198. N-linked (GlcNAc...) asparagine glycosylation is found at N94, N210, and N316. The segment at P251–D548 is pectinesterase 23. Substrate is bound by residues T333 and Q363. Catalysis depends on D386, which acts as the Proton donor; for pectinesterase activity. C400 and C420 are joined by a disulfide. The active-site Nucleophile; for pectinesterase activity is D407. Substrate is bound by residues R475 and W477.

This sequence in the N-terminal section; belongs to the PMEI family. It in the C-terminal section; belongs to the pectinesterase family. Expressed in mature pollen grains in the anthers and on the stigma. Found in pollen tubes within the style.

It localises to the secreted. The protein localises to the cell wall. It catalyses the reaction [(1-&gt;4)-alpha-D-galacturonosyl methyl ester](n) + n H2O = [(1-&gt;4)-alpha-D-galacturonosyl](n) + n methanol + n H(+). It functions in the pathway glycan metabolism; pectin degradation; 2-dehydro-3-deoxy-D-gluconate from pectin: step 1/5. Acts in the modification of cell walls via demethylesterification of cell wall pectin. The sequence is that of Probable pectinesterase/pectinesterase inhibitor 23 (PME23) from Arabidopsis thaliana (Mouse-ear cress).